A 438-amino-acid polypeptide reads, in one-letter code: Trigger factor (438 aa).

Residues 163 to 248 (GEIAVLDFAA…VHAVKERKLP (86 aa)) form the PPIase FKBP-type domain.

Belongs to the FKBP-type PPIase family. Tig subfamily.

The protein localises to the cytoplasm. The enzyme catalyses [protein]-peptidylproline (omega=180) = [protein]-peptidylproline (omega=0). In terms of biological role, involved in protein export. Acts as a chaperone by maintaining the newly synthesized protein in an open conformation. Functions as a peptidyl-prolyl cis-trans isomerase. This is Trigger factor from Oleidesulfovibrio alaskensis (strain ATCC BAA-1058 / DSM 17464 / G20) (Desulfovibrio alaskensis).